A 74-amino-acid polypeptide reads, in one-letter code: Consomatin Ma1 (74 aa).

Residues 1-22 (MQTAYWVMVMMMVWITAPLSEG) form the signal peptide. The propeptide occupies 23 to 57 (GKLNGEIRGLVSHILIPQHTLRSLTSRDRSDNGGS). Cysteine 63 and cysteine 68 form a disulfide bridge. Tryptophan 65 bears the D-tryptophan mark. Proline 69, proline 70, and proline 72 each carry 4-hydroxyproline.

It belongs to the conotoxin C superfamily. Consomatin family. Expressed by the venom duct.

It localises to the secreted. Moderately activates human somatostatin receptors (SSTR) with a preferential activation of SSTR1 and SSTR4. In vivo, does not cause behavioral changes in mice within a few minutes of intracranial injection, but causes a progressive loss of movement thereafter. Four to five hours after injection, mice recover, even with the highest dose tested. Shows antinociception and antihyperalgesia activities in two mouse models of acute pain, most probably by acting outside the central nervous system. The sequence is that of Consomatin Ma1 from Conus magus (Magical cone).